Reading from the N-terminus, the 469-residue chain is Endoplasmic reticulum oxidoreductin-1 (469 aa).

An N-terminal signal peptide occupies residues 1 to 36 (MGKGAIKEEESEKKRKTWRWPLATLVVVFLAVAVSS). 6 cysteine pairs are disulfide-bonded: C52–C71, C54–C69, C108–C372, C117–C122, C222–C231, and C375–C378. Positions 201, 203, and 214 each coordinate FAD. FAD-binding residues include S242, H245, R275, and R282. N-linked (GlcNAc...) asparagine glycosylation is present at N365.

Belongs to the EROs family. May function both as a monomer and a homodimer. FAD is required as a cofactor. N-glycosylated.

The protein localises to the endoplasmic reticulum membrane. Its function is as follows. Essential oxidoreductase that oxidizes proteins in the endoplasmic reticulum to produce disulfide bonds. Acts by oxidizing directly PDI isomerase through a direct disulfide exchange. Does not act as a direct oxidant of folding substrate, but relies on PDI to transfer oxidizing equivalent. Does not oxidize all PDI related proteins, suggesting that it can discriminate between PDI and related proteins. Its reoxidation probably involves electron transfer to molecular oxygen via FAD. Acts independently of glutathione. May be responsible for a significant proportion of reactive oxygen species (ROS) in the cell, thereby being a source of oxidative stress. The polypeptide is Endoplasmic reticulum oxidoreductin-1 (AERO1) (Arabidopsis thaliana (Mouse-ear cress)).